The primary structure comprises 219 residues: Cytidylate kinase (219 aa).

10-18 is a binding site for ATP; that stretch reads GPAAAGKST.

The protein belongs to the cytidylate kinase family. Type 1 subfamily.

The protein localises to the cytoplasm. The enzyme catalyses CMP + ATP = CDP + ADP. It catalyses the reaction dCMP + ATP = dCDP + ADP. This is Cytidylate kinase from Staphylococcus aureus (strain MRSA252).